The primary structure comprises 249 residues: Syntaxin-10 (249 aa).

Ser-2 is subject to N-acetylserine. Residues 2–228 (SLEDPFFVVR…VSHMTSDRRQ (227 aa)) are Cytoplasmic-facing. Positions 41-69 (EELDWTTNELRNGLRSIEWDLEDLEETIG) form a coiled coil. At Ser-108 the chain carries Phosphoserine. Thr-110 is subject to Phosphothreonine. Residues Ser-134, Ser-140, and Ser-143 each carry the phosphoserine modification. Residues 157–219 (QLIMDEQDQQ…DGVLRKLAKV (63 aa)) enclose the t-SNARE coiled-coil homology domain. A helical; Anchor for type IV membrane protein membrane pass occupies residues 229–249 (WCAIAVLVGVLLLVLILLFSL).

It belongs to the syntaxin family. In terms of assembly, interacts with VPS52. Expressed at high levels in heart, skeletal muscle and pancreas.

The protein localises to the golgi apparatus membrane. Functionally, SNARE involved in vesicular transport from the late endosomes to the trans-Golgi network. The polypeptide is Syntaxin-10 (STX10) (Homo sapiens (Human)).